Here is a 288-residue protein sequence, read N- to C-terminus: 2-hydroxy-6-oxononadienedioate/2-hydroxy-6-oxononatrienedioate hydrolase (288 aa).

His267 acts as the Proton acceptor in catalysis.

The protein belongs to the AB hydrolase superfamily. MhpC family. As to quaternary structure, homodimer.

It carries out the reaction (2Z,4E)-2-hydroxy-6-oxonona-2,4-dienedioate + H2O = (2Z)-2-hydroxypenta-2,4-dienoate + succinate + H(+). It catalyses the reaction (2Z,4E,7E)-2-hydroxy-6-oxonona-2,4,7-trienedioate + H2O = (2Z)-2-hydroxypenta-2,4-dienoate + fumarate + H(+). It participates in aromatic compound metabolism; 3-phenylpropanoate degradation. In terms of biological role, catalyzes the cleavage of the C5-C6 bond of 2-hydroxy-6-oxononadienedioate and 2-hydroxy-6-oxononatrienedioate, a dienol ring fission product of the bacterial meta-cleavage pathway for degradation of phenylpropionic acid. The polypeptide is 2-hydroxy-6-oxononadienedioate/2-hydroxy-6-oxononatrienedioate hydrolase (Escherichia coli O81 (strain ED1a)).